Reading from the N-terminus, the 460-residue chain is Light-independent protochlorophyllide reductase subunit N (460 aa).

C22, C47, and C107 together coordinate [4Fe-4S] cluster.

This sequence belongs to the BchN/ChlN family. In terms of assembly, protochlorophyllide reductase is composed of three subunits; ChlL, ChlN and ChlB. Forms a heterotetramer of two ChlB and two ChlN subunits. [4Fe-4S] cluster serves as cofactor.

The catalysed reaction is chlorophyllide a + oxidized 2[4Fe-4S]-[ferredoxin] + 2 ADP + 2 phosphate = protochlorophyllide a + reduced 2[4Fe-4S]-[ferredoxin] + 2 ATP + 2 H2O. Its pathway is porphyrin-containing compound metabolism; chlorophyll biosynthesis (light-independent). Functionally, component of the dark-operative protochlorophyllide reductase (DPOR) that uses Mg-ATP and reduced ferredoxin to reduce ring D of protochlorophyllide (Pchlide) to form chlorophyllide a (Chlide). This reaction is light-independent. The NB-protein (ChlN-ChlB) is the catalytic component of the complex. In Thermosynechococcus vestitus (strain NIES-2133 / IAM M-273 / BP-1), this protein is Light-independent protochlorophyllide reductase subunit N.